The sequence spans 357 residues: Outer membrane porin protein OmpD (357 aa).

The N-terminal stretch at 1–21 is a signal peptide; the sequence is MKLKLVAVAVTTLLAAGAVNA.

Belongs to the Gram-negative porin family. As to quaternary structure, homotrimer.

It localises to the cell outer membrane. Functionally, forms pores that allow passive diffusion of small molecules across the outer membrane. The polypeptide is Outer membrane porin protein OmpD (ompD) (Citrobacter koseri (strain ATCC BAA-895 / CDC 4225-83 / SGSC4696)).